Reading from the N-terminus, the 126-residue chain is Adenosine 5'-monophosphoramidase HINT1 (126 aa).

N-acetylalanine is present on A2. The HIT domain maps to 18–126 (IFGKIIRKEI…GGRQMNWPPG (109 aa)). 2 positions are modified to N6-acetyllysine: K21 and K30. Residue 43-44 (DI) participates in AMP binding. 2 positions are modified to phosphoserine: S45 and S72. Residues N99, 105 to 107 (GQS), and 112 to 114 (HLH) contribute to the AMP site. Positions 110–114 (HVHLH) match the Histidine triad motif motif. The active-site Tele-AMP-histidine intermediate is H112.

This sequence belongs to the HINT family. As to quaternary structure, homodimer. Interacts with CDK7. Interacts with RUVBL1 and RUVBL2 and is associated with the LEF1/TCF1-CTNNB1 complex and with a KAT5 histone acetyltransferase complex. Identified in a complex with MITF and CTNNB1. Interacts with CDC34 and RBX1, and is part of a SCF (SKP2-CUL1-F-box protein) E3 ubiquitin-protein ligase complex. Interacts with SUMO1, SUMO2 and RGS17. Interacts with the Ten-1 ICD form of TENM1. Interacts with CALM1; interaction increases in the presence of calcium ions. In terms of tissue distribution, widely expressed.

It localises to the cytoplasm. It is found in the nucleus. The enzyme catalyses adenosine 5'-phosphoramidate + H2O = AMP + NH4(+). In terms of biological role, exhibits adenosine 5'-monophosphoramidase activity, hydrolyzing purine nucleotide phosphoramidates with a single phosphate group such as adenosine 5'monophosphoramidate (AMP-NH2) to yield AMP and NH2. Hydrolyzes adenosine 5'monophosphomorpholidate (AMP-morpholidate) and guanosine 5'monophosphomorpholidate (GMP-morpholidate). Hydrolyzes lysyl-AMP (AMP-N-epsilon-(N-alpha-acetyl lysine methyl ester)) generated by lysine tRNA ligase, as well as Met-AMP, His-AMP and Asp-AMP, lysyl-GMP (GMP-N-epsilon-(N-alpha-acetyl lysine methyl ester)) and AMP-N-alanine methyl ester. Can also convert adenosine 5'-O-phosphorothioate and guanosine 5'-O-phosphorothioate to the corresponding nucleoside 5'-O-phosphates with concomitant release of hydrogen sulfide. In addition, functions as a scaffolding protein that modulates transcriptional activation by the LEF1/TCF1-CTNNB1 complex and by the complex formed with MITF and CTNNB1. Modulates p53/TP53 levels and p53/TP53-mediated apoptosis. Modulates proteasomal degradation of target proteins by the SCF (SKP2-CUL1-F-box protein) E3 ubiquitin-protein ligase complex. Also exhibits SUMO-specific isopeptidase activity, deconjugating SUMO1 from RANGAP1 and RGS17. The sequence is that of Adenosine 5'-monophosphoramidase HINT1 (HINT1) from Bos taurus (Bovine).